The sequence spans 113 residues: Large ribosomal subunit protein uL22 (113 aa).

It belongs to the universal ribosomal protein uL22 family. Part of the 50S ribosomal subunit.

This protein binds specifically to 23S rRNA; its binding is stimulated by other ribosomal proteins, e.g. L4, L17, and L20. It is important during the early stages of 50S assembly. It makes multiple contacts with different domains of the 23S rRNA in the assembled 50S subunit and ribosome. Functionally, the globular domain of the protein is located near the polypeptide exit tunnel on the outside of the subunit, while an extended beta-hairpin is found that lines the wall of the exit tunnel in the center of the 70S ribosome. This is Large ribosomal subunit protein uL22 from Xanthomonas axonopodis pv. citri (strain 306).